The sequence spans 238 residues: Aspartate/glutamate leucyltransferase (238 aa).

This sequence belongs to the R-transferase family. Bpt subfamily.

The protein localises to the cytoplasm. The catalysed reaction is N-terminal L-glutamyl-[protein] + L-leucyl-tRNA(Leu) = N-terminal L-leucyl-L-glutamyl-[protein] + tRNA(Leu) + H(+). The enzyme catalyses N-terminal L-aspartyl-[protein] + L-leucyl-tRNA(Leu) = N-terminal L-leucyl-L-aspartyl-[protein] + tRNA(Leu) + H(+). Functions in the N-end rule pathway of protein degradation where it conjugates Leu from its aminoacyl-tRNA to the N-termini of proteins containing an N-terminal aspartate or glutamate. This is Aspartate/glutamate leucyltransferase from Shewanella oneidensis (strain ATCC 700550 / JCM 31522 / CIP 106686 / LMG 19005 / NCIMB 14063 / MR-1).